Consider the following 351-residue polypeptide: Anthranilate phosphoribosyltransferase (351 aa).

Residues G80, 83 to 84 (GD), T88, 90 to 93 (NVST), 108 to 116 (KHGNRSVTS), and S120 each bind 5-phospho-alpha-D-ribose 1-diphosphate. Residue G80 coordinates anthranilate. Mg(2+) is bound at residue S92. N111 serves as a coordination point for anthranilate. Position 166 (R166) interacts with anthranilate. The Mg(2+) site is built by D229 and E230.

Belongs to the anthranilate phosphoribosyltransferase family. Homodimer. Mg(2+) is required as a cofactor.

The enzyme catalyses N-(5-phospho-beta-D-ribosyl)anthranilate + diphosphate = 5-phospho-alpha-D-ribose 1-diphosphate + anthranilate. It functions in the pathway amino-acid biosynthesis; L-tryptophan biosynthesis; L-tryptophan from chorismate: step 2/5. Functionally, catalyzes the transfer of the phosphoribosyl group of 5-phosphorylribose-1-pyrophosphate (PRPP) to anthranilate to yield N-(5'-phosphoribosyl)-anthranilate (PRA). The chain is Anthranilate phosphoribosyltransferase from Prosthecochloris aestuarii (strain DSM 271 / SK 413).